A 397-amino-acid polypeptide reads, in one-letter code: 1-deoxy-D-xylulose 5-phosphate reductoisomerase (397 aa).

NADPH is bound by residues Thr-17, Gly-18, Ser-19, Ile-20, Asn-47, and Asn-130. 1-deoxy-D-xylulose 5-phosphate is bound at residue Lys-131. Glu-132 is an NADPH binding site. Position 156 (Asp-156) interacts with Mn(2+). Residues Ser-157, Glu-158, Ser-182, and His-205 each contribute to the 1-deoxy-D-xylulose 5-phosphate site. Glu-158 provides a ligand contact to Mn(2+). Gly-211 is an NADPH binding site. 1-deoxy-D-xylulose 5-phosphate is bound by residues Ser-218, Asn-223, Lys-224, and Glu-227. Glu-227 contacts Mn(2+).

The protein belongs to the DXR family. Mg(2+) is required as a cofactor. The cofactor is Mn(2+).

It carries out the reaction 2-C-methyl-D-erythritol 4-phosphate + NADP(+) = 1-deoxy-D-xylulose 5-phosphate + NADPH + H(+). Its pathway is isoprenoid biosynthesis; isopentenyl diphosphate biosynthesis via DXP pathway; isopentenyl diphosphate from 1-deoxy-D-xylulose 5-phosphate: step 1/6. Functionally, catalyzes the NADPH-dependent rearrangement and reduction of 1-deoxy-D-xylulose-5-phosphate (DXP) to 2-C-methyl-D-erythritol 4-phosphate (MEP). The sequence is that of 1-deoxy-D-xylulose 5-phosphate reductoisomerase from Rhizobium rhizogenes (strain K84 / ATCC BAA-868) (Agrobacterium radiobacter).